Consider the following 69-residue polypeptide: UPF0150 protein Ta0767 (69 aa).

This sequence belongs to the UPF0150 family.

The chain is UPF0150 protein Ta0767 from Thermoplasma acidophilum (strain ATCC 25905 / DSM 1728 / JCM 9062 / NBRC 15155 / AMRC-C165).